Consider the following 116-residue polypeptide: Host transcription reprogramming factor 4 (116 aa).

An N-terminal signal peptide occupies residues 1 to 24 (MHIIHISKFMALLAISTIAIPTRG). Residues 24–53 (GRSEVDSRDVNQAQTVTSGSSIAPSGSEKR) form a disordered region. Over residues 33 to 47 (VNQAQTVTSGSSIAP) the composition is skewed to polar residues. Residues 74-96 (FQCPHCKDGISNRVALYTHVKAF) form a C2H2-type; degenerate zinc finger.

The protein localises to the secreted. The protein resides in the host nucleus. In terms of biological role, probable secreted effector that translocates into the nuclei of host cells to reprogram the expression of targeted genes by binding on effector binding elements in rice. This Pyricularia oryzae (strain 70-15 / ATCC MYA-4617 / FGSC 8958) (Rice blast fungus) protein is Host transcription reprogramming factor 4.